A 460-amino-acid chain; its full sequence is ATP synthase subunit beta (460 aa).

Residue 150–157 coordinates ATP; that stretch reads GGAGVGKT.

It belongs to the ATPase alpha/beta chains family. In terms of assembly, F-type ATPases have 2 components, CF(1) - the catalytic core - and CF(0) - the membrane proton channel. CF(1) has five subunits: alpha(3), beta(3), gamma(1), delta(1), epsilon(1). CF(0) has three main subunits: a(1), b(2) and c(9-12). The alpha and beta chains form an alternating ring which encloses part of the gamma chain. CF(1) is attached to CF(0) by a central stalk formed by the gamma and epsilon chains, while a peripheral stalk is formed by the delta and b chains.

It localises to the cell inner membrane. The enzyme catalyses ATP + H2O + 4 H(+)(in) = ADP + phosphate + 5 H(+)(out). In terms of biological role, produces ATP from ADP in the presence of a proton gradient across the membrane. The catalytic sites are hosted primarily by the beta subunits. The polypeptide is ATP synthase subunit beta (Serratia proteamaculans (strain 568)).